We begin with the raw amino-acid sequence, 389 residues long: NADH-quinone oxidoreductase subunit D (389 aa).

It belongs to the complex I 49 kDa subunit family. NDH-1 is composed of 14 different subunits. Subunits NuoB, C, D, E, F, and G constitute the peripheral sector of the complex.

The protein resides in the cell inner membrane. The catalysed reaction is a quinone + NADH + 5 H(+)(in) = a quinol + NAD(+) + 4 H(+)(out). In terms of biological role, NDH-1 shuttles electrons from NADH, via FMN and iron-sulfur (Fe-S) centers, to quinones in the respiratory chain. The immediate electron acceptor for the enzyme in this species is believed to be ubiquinone. Couples the redox reaction to proton translocation (for every two electrons transferred, four hydrogen ions are translocated across the cytoplasmic membrane), and thus conserves the redox energy in a proton gradient. The chain is NADH-quinone oxidoreductase subunit D from Citrifermentans bemidjiense (strain ATCC BAA-1014 / DSM 16622 / JCM 12645 / Bem) (Geobacter bemidjiensis).